Here is a 323-residue protein sequence, read N- to C-terminus: o-succinylbenzoate synthase (323 aa).

Residue Lys134 is the Proton donor of the active site. Residues Asp162, Glu191, and Asp214 each coordinate Mg(2+). The Proton acceptor role is filled by Lys236.

Belongs to the mandelate racemase/muconate lactonizing enzyme family. MenC type 1 subfamily. It depends on a divalent metal cation as a cofactor.

It catalyses the reaction (1R,6R)-6-hydroxy-2-succinyl-cyclohexa-2,4-diene-1-carboxylate = 2-succinylbenzoate + H2O. It functions in the pathway quinol/quinone metabolism; 1,4-dihydroxy-2-naphthoate biosynthesis; 1,4-dihydroxy-2-naphthoate from chorismate: step 4/7. The protein operates within quinol/quinone metabolism; menaquinone biosynthesis. Converts 2-succinyl-6-hydroxy-2,4-cyclohexadiene-1-carboxylate (SHCHC) to 2-succinylbenzoate (OSB). The polypeptide is o-succinylbenzoate synthase (Yersinia pseudotuberculosis serotype O:3 (strain YPIII)).